The sequence spans 153 residues: Heavy metal-associated isoprenylated plant protein 26 (153 aa).

One can recognise an HMA domain in the interval 25–89; that stretch reads LQTVEIKVKM…MSHRTGKKVE (65 aa). Positions 36 and 39 each coordinate a metal cation. Residue C150 is modified to Cysteine methyl ester. C150 carries the S-farnesyl cysteine lipid modification. Positions 151 to 153 are cleaved as a propeptide — removed in mature form; the sequence is VVM.

The protein belongs to the HIPP family. Interacts with ZHD11/HB29 and ACBP2 (via ankyrin repeats). May also interact with HB21. As to expression, expressed in roots, stems and flowers. Lower expression in siliques and leaves. Expressed in the vascular tissues. Detected in lateral roots, shoot apical meristem, petals of unopened flowers and weak expression in leaf vasculature.

The protein resides in the nucleus membrane. The protein localises to the cell membrane. Heavy-metal-binding protein. Binds lead, cadmium and copper. May be involved in heavy-metal transport. May be involved in cadmium transport and play a role in cadmium detoxification. The polypeptide is Heavy metal-associated isoprenylated plant protein 26 (Arabidopsis thaliana (Mouse-ear cress)).